We begin with the raw amino-acid sequence, 270 residues long: Phosphodiesterase YaeI (270 aa).

Residues Asp56, His58, Asp88, Asn120, His209, and His211 each contribute to the a divalent metal cation site.

It belongs to the metallophosphoesterase superfamily. A divalent metal cation is required as a cofactor.

In terms of biological role, shows phosphodiesterase activity, hydrolyzing phosphodiester bond in the artificial chromogenic substrate bis-p-nitrophenyl phosphate (bis-pNPP). This chain is Phosphodiesterase YaeI (yaeI), found in Escherichia coli (strain K12).